We begin with the raw amino-acid sequence, 188 residues long: dCTP deaminase (188 aa).

Residues 111–116 (KSTYAR), 135–137 (TLE), Gln156, Tyr170, and Gln180 contribute to the dCTP site. Glu137 (proton donor/acceptor) is an active-site residue.

It belongs to the dCTP deaminase family. In terms of assembly, homotrimer.

It catalyses the reaction dCTP + H2O + H(+) = dUTP + NH4(+). The protein operates within pyrimidine metabolism; dUMP biosynthesis; dUMP from dCTP (dUTP route): step 1/2. Catalyzes the deamination of dCTP to dUTP. This Acidovorax sp. (strain JS42) protein is dCTP deaminase.